The following is a 429-amino-acid chain: Enolase 1 (429 aa).

A (2R)-2-phosphoglycerate-binding site is contributed by glutamine 163. Glutamate 205 (proton donor) is an active-site residue. Residues aspartate 242, glutamate 287, and aspartate 314 each contribute to the Mg(2+) site. Lysine 339, arginine 368, serine 369, and lysine 390 together coordinate (2R)-2-phosphoglycerate. Residue lysine 339 is the Proton acceptor of the active site.

This sequence belongs to the enolase family. The cofactor is Mg(2+).

It localises to the cytoplasm. It is found in the secreted. The protein resides in the cell surface. It catalyses the reaction (2R)-2-phosphoglycerate = phosphoenolpyruvate + H2O. It participates in carbohydrate degradation; glycolysis; pyruvate from D-glyceraldehyde 3-phosphate: step 4/5. Functionally, catalyzes the reversible conversion of 2-phosphoglycerate (2-PG) into phosphoenolpyruvate (PEP). It is essential for the degradation of carbohydrates via glycolysis. The chain is Enolase 1 from Cupriavidus metallidurans (strain ATCC 43123 / DSM 2839 / NBRC 102507 / CH34) (Ralstonia metallidurans).